Consider the following 948-residue polypeptide: ATPase 2, plasma membrane-type (948 aa).

Ser-2 is modified (N-acetylserine). The Cytoplasmic portion of the chain corresponds to 2–61; that stretch reads SSLEDIKNETVDLEKIPIEEVFQQLKCSREGLTTQEGEDRIQIFGPNKLEEKKESKLLKF. The helical transmembrane segment at 62-81 threads the bilayer; it reads LGFMWNPLSWVMEMAAIMAI. Residues 82–93 lie on the Extracellular side of the membrane; the sequence is ALANGDGRPPDW. A helical transmembrane segment spans residues 94 to 114; that stretch reads QDFVGIICLLVINSTISFIEE. The Cytoplasmic segment spans residues 115–243; the sequence is NNAGNAAAAL…GHFQKVLTAI (129 aa). The helical transmembrane segment at 244-264 threads the bilayer; it reads GNFCICSIAIGMVIEIIVMYP. Topologically, residues 265–273 are extracellular; that stretch reads IQRRKYRDG. The chain crosses the membrane as a helical span at residues 274–291; that stretch reads IDNLLVLLIGGIPIAMPT. The Cytoplasmic segment spans residues 292-643; sequence VLSVTMAIGS…TSRAIFQRMK (352 aa). The 4-aspartylphosphate intermediate role is filled by Asp-329. 2 residues coordinate Mg(2+): Asp-588 and Asp-592. The chain crosses the membrane as a helical span at residues 644–665; that stretch reads NYTIYAVSITIRIVFGFMLIAL. Over 666–670 the chain is Extracellular; sequence IWEFD. A helical transmembrane segment spans residues 671–693; that stretch reads FSAFMVLIIAILNDGTIMTISKD. Residues 694–709 are Cytoplasmic-facing; the sequence is RVKPSPTPDSWKLKEI. A helical membrane pass occupies residues 710 to 730; it reads FATGVVLGGYQAIMTVIFFWA. Topologically, residues 731–751 are extracellular; the sequence is AHKTDFFSDTFGVRSIRDNNH. Residues 752–772 form a helical membrane-spanning segment; the sequence is ELMGAVYLQVSIISQALIFVT. Over 773 to 784 the chain is Cytoplasmic; it reads RSRSWSFVERPG. The chain crosses the membrane as a helical span at residues 785–805; that stretch reads ALLMIAFLIAQLIATLIAVYA. Residues 806–813 are Extracellular-facing; it reads NWEFAKIR. The chain crosses the membrane as a helical span at residues 814–834; that stretch reads GIGWGWAGVIWLYSIVTYFPL. At 835–948 the chain is on the cytoplasmic side; that stretch reads DVFKFAIRYI…DIETPSHYTV (114 aa). Thr-881 is modified (phosphothreonine). Ser-899 carries the phosphoserine modification. At Ser-931 the chain carries Phosphoserine; by CIPK11. An interaction with 14-3-3 proteins region spans residues 946–948; that stretch reads YTV. Thr-947 carries the post-translational modification Phosphothreonine.

The protein belongs to the cation transport ATPase (P-type) (TC 3.A.3) family. Type IIIA subfamily. In terms of assembly, binds to 14-3-3 proteins. The binding is induced by phosphorylation of Thr-947 and it activates the H(+)-ATPase. Interacts (via the R-domain) with PSY1R (via C-terminus). Part of a functional complex containing PSKR1, BAK1, CNGC17, and AHA. Interacts with CNGC17 and PSKR1. Interacts with PP2C67/PP2C-D1 at the plasma membrane. Interacts with AHA1. Post-translationally, phosphorylated, probably by PHOT1 and PHOT2, at C-terminal Thr-947 in guard cells in response to blue light to induce stomatal opening. Phosphorylation at Thr-881 by PSY1R. This phosphorylation activates proton pumping. Decreased phosphorylation in response to flg22 elicitation. In terms of processing, phosphorylation at Ser-899 is specifically induced by RALF1, thus leading to the inhibition of proton transport. Increased phosphorylation in response to flg22 elicitation. Post-translationally, phosphorylation of Thr-947 induces the binding to 14-3-3 proteins, but phosphorylation of Ser-931 interferes with this binding no matter whether Thr-947 is phosphorylated or not. Decreased phosphorylation in response to flg22 elicitation. Phosphorylation of Thr-947 is enhanced by the presence of brassinolide (BL) via the BRI1-BIN2 pathway and prior the trigger of hypocotyl elongation. Inactivated by PP2C67/PP2C-D1-mediated Thr-947 dephosphorylation; SAUR19 inhibits the action of PP2C67/PP2C-D1 and thus promotes the active phosphorylated form. Abscisic acid induces dephosphorylation of AHA2 in etiolated seedlings, suppressing ATP hydrolysis and hypocotyl elongation. As to expression, higher levels in roots than in shoots. Expressed in epidermal and root cortex cells, in phloem, xylem and root hairs. Detected in cotyledons, leaves, hypocotyls, roots and root hairs. Expressed in guard cells and mesophyll cells.

Its subcellular location is the cell membrane. It catalyses the reaction ATP + H2O + H(+)(in) = ADP + phosphate + 2 H(+)(out). Its activity is regulated as follows. Regulated by an auto-inhibitory C-terminal domain that can be displaced by phosphorylation of Thr-947 and the subsequent binding of 14-3-3 proteins. Negatively regulated by PKS5. PKS5 phosphorylates Ser-931, inhibiting interaction with the activating 14-3-3 protein. Positively regulated by PSY1R. PSY1R phosphorylates Thr-881, situated in the auto-inhibitory region I of the C-terminal domain, causing pump activation. Negatively regulated by the secreted peptide RALF. After specific binding to FERONIA, RALF causes phosphorylation at Ser-899, mediating the inhibition of proton transport. Activated by lysophospholipids, without the involvement of phosphorylation of Thr-947. This activation is critically dependent on the single autoinhibitory residue Leu-919. Repressed by PP2C-D phosphatases (e.g. PP2C67/PP2C-D1 and PP2C64/PP2C-D5) which dephosphorylates Thr-947. Triggered by SAUR19 via phosphorylation of the C-terminal autoinhibitory domain (e.g. Thr-947), as a result of the inhibition of PP2C67/PP2C-D1. Phosphorylation on Thr residues is repressed by tyrphostin 9, sphingosine, GW5074 and BML-265. By contrast, the fungal phytotoxin fusicoccin (FC) promotes phosphorylation of Thr-947 independently to BHP, thus leading to large stomatal opening. Functionally, the plasma membrane H(+) ATPase of plants and fungi generates a proton gradient that drives the active transport of nutrients by H(+)-symport. The resulting external acidification and/or internal alkinization may mediate growth responses. Involved in maintaining the membrane potential and delta-pH, together forming the plasma membrane protonmotive force (PMF) required for root and hypocotyl elongation and root tropism. Important for root growth and development during different nitrogen regimes. Forms a functional cation-translocating unit with CNGC17 that is activated by PSKR1/BAK1 and possibly other BAK1/RLK complexes. Promotes stomatal opening in response to blue light. The polypeptide is ATPase 2, plasma membrane-type (Arabidopsis thaliana (Mouse-ear cress)).